The chain runs to 621 residues: MARLPTTELRKYLLTGQFTRRGCLHLRPSPLAPPIPPLRTLSTTPPTPSDQQPQIIPLRKQLKDQAKAAKLSGSPKKKLKKSDNQTVPGWDLTVGIEIHAQLNTPSKLFSPASTPSSSSDDAVHHHHPNTHVAPFDLAIPGSQPSFQPTTLIPAIRAALALNCHIEPISRFDRKHYFHWDQPSGYQITQYYHPFARSGSVTLYPRDGIAAEDGEQVTVGIKQLQMEQDTAKTLAQPNSTHYLDFNRVGVPLVEIITEPCIHRPATAAAFVRKVQMLLKSVDACTSGLEQGGLRADVNVSVKRTGEEELGTRTEIKNLSSFKAVEDAIIAERDRQIRVLEEGGRIEGETRGWSLGSMETRRLRGKEGEVDYRYMPDPDLGPVVIGGDLVERLGETMGMLPDEEVGVLMGRFGLSERDAMALMLMEGRLEYFYGVLEELERMLGVEAVEGGEQRHAMLAANWCLHELGKLAEAEEVGEAAAEEVTSQVPEQDLAAILFYLHQKKVTAKVAKDLLWDVFRGTIATGGVTEQIDSQDLWYKEITEADYAAIADEVIEGQEKVLQDFLKFKQGKSKAYPQGKLGFLVGKMMRAGPEQGKGMDPASAERVMRVRIEQVYLPRLEDAQ.

Residues 1-41 (MARLPTTELRKYLLTGQFTRRGCLHLRPSPLAPPIPPLRTL) constitute a mitochondrion transit peptide. Disordered stretches follow at residues 26–86 (LRPS…DNQT) and 106–136 (SKLF…APFD). Composition is skewed to low complexity over residues 38–57 (LRTL…QIIP) and 110–120 (SPASTPSSSSD).

It belongs to the GatB/GatE family. GatB subfamily. As to quaternary structure, subunit of the heterotrimeric GatCAB amidotransferase (AdT) complex, composed of A, B and C subunits.

It is found in the mitochondrion. It carries out the reaction L-glutamyl-tRNA(Gln) + L-glutamine + ATP + H2O = L-glutaminyl-tRNA(Gln) + L-glutamate + ADP + phosphate + H(+). Its function is as follows. Allows the formation of correctly charged Gln-tRNA(Gln) through the transamidation of misacylated Glu-tRNA(Gln) in the mitochondria. The reaction takes place in the presence of glutamine and ATP through an activated gamma-phospho-Glu-tRNA(Gln). The chain is Glutamyl-tRNA(Gln) amidotransferase subunit B, mitochondrial from Podospora anserina (strain S / ATCC MYA-4624 / DSM 980 / FGSC 10383) (Pleurage anserina).